The primary structure comprises 258 residues: uncharacterized protein (258 aa).

Residues 40–54 (AQKTDTPLDSSSYAV) are compositionally biased toward polar residues. Residues 40–63 (AQKTDTPLDSSSYAVTSPEEAPNE) are disordered.

This is an uncharacterized protein from Treponema pallidum (strain Nichols).